Reading from the N-terminus, the 30-residue chain is rRNA N-glycosylase (30 aa).

It belongs to the ribosome-inactivating protein family. Type 1 RIP subfamily. As to expression, expressed in seeds.

It catalyses the reaction Endohydrolysis of the N-glycosidic bond at one specific adenosine on the 28S rRNA.. Its function is as follows. Exhibits N-glycosylase activity. Catalyzes the release of one adenine from a ribosome. Acts as a ribosome-inactivating protein and inhibits protein synthesis in a rabbit-reticulocyte lysate system and in various cell lines (in vitro). This Saponaria ocymoides (Rock soapwort) protein is rRNA N-glycosylase.